Here is a 446-residue protein sequence, read N- to C-terminus: Putative ZDHHC-type palmitoyltransferase 2 (446 aa).

Disordered stretches follow at residues 1-33 (MNLYNNSNSSGSSNSSSSSNNKTNIDYNDINNN) and 56-83 (QIINKNNNNNHNRNNNNNNNNNNNHNNP). 4 N-linked (GlcNAc...) asparagine glycosylation sites follow: Asn-5, Asn-8, Asn-14, and Asn-21. Residues 56 to 81 (QIINKNNNNNHNRNNNNNNNNNNNHN) are compositionally biased toward low complexity. N-linked (GlcNAc...) asparagine glycosylation is found at Asn-141, Asn-145, Asn-159, and Asn-165. Transmembrane regions (helical) follow at residues 178 to 198 (IVIFLILVPYIYILNFAIFPW), 210 to 230 (IHSFISMALVIQMLCNYYLCS), 305 to 325 (YFVLFLFYTSISIIYFFTLLI), 349 to 369 (LFLLGILIIILIIAGISIMAL), and 410 to 430 (IISNFSIVFGNLSFLWLLPTI). The region spanning 261-311 (KWCNKCNHQKPERAHHCRYCNRCVLRMDHHCQWLQNCIGLFNQKYFVLFLF) is the DHHC domain.

The protein belongs to the DHHC palmitoyltransferase family.

It localises to the membrane. It carries out the reaction L-cysteinyl-[protein] + hexadecanoyl-CoA = S-hexadecanoyl-L-cysteinyl-[protein] + CoA. This chain is Putative ZDHHC-type palmitoyltransferase 2, found in Dictyostelium discoideum (Social amoeba).